Consider the following 289-residue polypeptide: WUSCHEL-related homeobox 1 (289 aa).

Residues 1–11 show a composition bias toward low complexity; that stretch reads MDHMQQQQRQQ. A disordered region spans residues 1–34; that stretch reads MDHMQQQQRQQVGGGGGEEVAGRGGVPVCRPSGT. Gly residues predominate over residues 12–25; that stretch reads VGGGGGEEVAGRGG. A DNA-binding region (homeobox; WUS-type) is located at residues 31 to 96; that stretch reads PSGTRWTPTT…NHKARERQKK (66 aa).

This sequence belongs to the WUS homeobox family. As to quaternary structure, interacts with TPR1, TPR2 and TPR3. As to expression, expressed in young leaf primordia. Expressed in branch an floral meristems. Transiently expressed in the shoot apex.

The protein resides in the nucleus. Its function is as follows. Transcription repressor required for the formation and development of tiller buds and panicles. Required for tiller formation and female sterility. Required for the early developmental stages of axillary meristem formation. Plays a role in maintaining the axillary premeristem zone and in promoting the formation of the axillary meristem by promoting OSH1 expression. Does not seem to be involved in maintenance of the shoot apical meristem (SAM). In Oryza sativa subsp. japonica (Rice), this protein is WUSCHEL-related homeobox 1.